The chain runs to 348 residues: Dihydroorotase (348 aa).

2 residues coordinate Zn(2+): histidine 17 and histidine 19. Substrate is bound by residues 19–21 (HLR) and asparagine 45. 3 residues coordinate Zn(2+): lysine 103, histidine 140, and histidine 178. Lysine 103 is modified (N6-carboxylysine). Histidine 140 contributes to the substrate binding site. Substrate is bound at residue leucine 223. Residue aspartate 251 coordinates Zn(2+). The active site involves aspartate 251. Substrate-binding residues include histidine 255 and alanine 267.

This sequence belongs to the metallo-dependent hydrolases superfamily. DHOase family. Class II DHOase subfamily. In terms of assembly, homodimer. Requires Zn(2+) as cofactor.

It carries out the reaction (S)-dihydroorotate + H2O = N-carbamoyl-L-aspartate + H(+). Its pathway is pyrimidine metabolism; UMP biosynthesis via de novo pathway; (S)-dihydroorotate from bicarbonate: step 3/3. Its function is as follows. Catalyzes the reversible cyclization of carbamoyl aspartate to dihydroorotate. The sequence is that of Dihydroorotase from Escherichia coli O17:K52:H18 (strain UMN026 / ExPEC).